A 442-amino-acid chain; its full sequence is SPRY domain-containing protein 3 (442 aa).

In terms of domain architecture, B30.2/SPRY spans 17–204 (DLNLHYRFLN…VRLHLNAELG (188 aa)). The segment at 371-394 (EGEEEEEEEEEEEDGEEIEPEHEG) is disordered. Acidic residues predominate over residues 372–390 (GEEEEEEEEEEEDGEEIEP).

This Homo sapiens (Human) protein is SPRY domain-containing protein 3 (SPRYD3).